The following is a 686-amino-acid chain: U-box domain-containing protein 19 (686 aa).

The U-box domain maps to 277-351 (LNVDDLRCPI…QSYSKQNGVV (75 aa)). ARM repeat units lie at residues 406–445 (TFYRSCLVEAGVVESLMKILRSDDPRIQENAMAGIMNLSK), 448–489 (AGKT…YLSS), 491–533 (GDYS…SLLM), 536–577 (PDNH…KMAE), and 579–620 (PDGM…NLCH).

It catalyses the reaction S-ubiquitinyl-[E2 ubiquitin-conjugating enzyme]-L-cysteine + [acceptor protein]-L-lysine = [E2 ubiquitin-conjugating enzyme]-L-cysteine + N(6)-ubiquitinyl-[acceptor protein]-L-lysine.. It functions in the pathway protein modification; protein ubiquitination. Functions as an E3 ubiquitin ligase. The sequence is that of U-box domain-containing protein 19 (PUB19) from Arabidopsis thaliana (Mouse-ear cress).